Consider the following 337-residue polypeptide: METMRAQRLQPGVGVGGRGTLRALRPGVTGAPTSAATPPVGPPPAPPPPAPPLPPLLLAGAPGLPLPPGAAGSPAVLREAVEAVVRSFAKHTQGYGRVNVVEALQEFWQMKQSRGADLKNGALVVYEMVPSNSPPYVCYVTLPGGSCFGSFQFCPTKAEARRSAAKIALMNSVFNEHPSRRITDEFIEKSVSEALASFNGNREEADNPNTGIGAFRFMLESNKGKSMLEFQELMTVFQLLHWNGSLKAMRERQCSRQEVLAHYSHRALDDDIRHQMALDWVSREQSVPGALSRELASTERELDEARLAGKELRFHKEKKDILMLAAGQLGNMHSSSC.

Residues 1 to 55 (METMRAQRLQPGVGVGGRGTLRALRPGVTGAPTSAATPPVGPPPAPPPPAPPLPP) are disordered. The segment covering 26–38 (PGVTGAPTSAATP) has biased composition (low complexity). Pro residues predominate over residues 39-55 (PVGPPPAPPPPAPPLPP).

The protein belongs to the LIX1 family.

This Mus musculus (Mouse) protein is LIX1-like protein (Lix1l).